A 180-amino-acid chain; its full sequence is Cell division protein SepF (180 aa).

The tract at residues 21–40 (LDDDYDDGRAVGRDDRRAMH) is disordered. A compositionally biased stretch (basic and acidic residues) spans 27 to 40 (DGRAVGRDDRRAMH).

Belongs to the SepF family. In terms of assembly, homodimer. Interacts with FtsZ.

It is found in the cytoplasm. Functionally, cell division protein that is part of the divisome complex and is recruited early to the Z-ring. Probably stimulates Z-ring formation, perhaps through the cross-linking of FtsZ protofilaments. Its function overlaps with FtsA. This Frankia casuarinae (strain DSM 45818 / CECT 9043 / HFP020203 / CcI3) protein is Cell division protein SepF.